The chain runs to 359 residues: MKALILVGGFGTRLRPLTLSKPKPIVEFANKAMILHQIEALCKIGVNEVVLAVNYRPQLMSQYLEPYEKKLGIKISYSHETVPLGTAGPLALARDLLNDGEPFFVLNSDIICDFPFADLLAFHKSHGGEGTIMVTKVEEPSKYGVVVYKEENGQILKFVEKPQVYVGNKINAGVYIFNPTILDRIQPKPTSIEKEIFPAMAADSQLYCMQLEGFWMDVGQPKDFLSGMGLYLNSLKSKQPELLATGNGIIGPVLIDPSSVIEPGCLIGPNVTIGPNCVIQEGTRLVNTTVLEGTTIGKNSWIKSTIIGWNSSIGKWVRMENTSVLGEDVHVSDELYINGGKILPHKSITSSIPEPEIIM.

The tract at residues 2–221 is substrate-binding domain; sequence KALILVGGFG…EGFWMDVGQP (220 aa). Aspartate 109 lines the GDP-alpha-D-mannose pocket. Position 109 (aspartate 109) interacts with Mg(2+). Lysine 161 is an active-site residue. Aspartate 217 serves as a coordination point for GDP-alpha-D-mannose. Residue aspartate 217 participates in Mg(2+) binding. Positions 244–359 are hexapeptide repeat domain; sequence ATGNGIIGPV…SSIPEPEIIM (116 aa).

It belongs to the transferase hexapeptide repeat family. Component of the GMPPA-GMPPB mannose-1-phosphate guanylyltransferase complex composed of 4 GMPPA subunits and 8 gmppB subunits; the complex is organized into three layers, a central layer made up of 2 gmppA dimers sandwiched between two layers each made up of 2 gmppB dimers. gmppB catalytic activity is reduced when part of the complex and binding of GDP-alpha-D-Mannose by gmppA induces allosteric feedback inhibition of gmppB. Mg(2+) is required as a cofactor.

The catalysed reaction is alpha-D-mannose 1-phosphate + GTP + H(+) = GDP-alpha-D-mannose + diphosphate. Its pathway is nucleotide-sugar biosynthesis; GDP-alpha-D-mannose biosynthesis; GDP-alpha-D-mannose from alpha-D-mannose 1-phosphate (GTP route): step 1/1. Enzyme activity is reduced by incorporation into the GMPPA-GMPPB mannose-1-phosphate guanylyltransferase complex. Allosterically inhibited, when part of the GMPPA-GMPPB complex, by GDP-alpha-D-mannose binding to GMPPA. Functionally, catalytic subunit of the GMPPA-GMPPB mannose-1-phosphate guanylyltransferase complex. Catalyzes the formation of GDP-mannose, an essential precursor of glycan moieties of glycoproteins and glycolipids. Can catalyze the reverse reaction in vitro. Together with GMPPA regulates GDP-alpha-D-mannose levels. In Dictyostelium discoideum (Social amoeba), this protein is Mannose-1-phosphate guanylyltransferase catalytic subunit beta (gmppB).